A 351-amino-acid polypeptide reads, in one-letter code: Purine permease 3 (351 aa).

A run of 10 helical transmembrane segments spans residues 4–24, 35–55, 72–92, 108–128, 132–152, 168–188, 207–227, 249–269, 274–294, and 304–324; these read ALVI…PLIM, IWFS…PLLF, FFLI…LSGF, TAAL…FFMV, FTPF…VLGM, ITGF…LPLV, FQLI…FIAG, VAVF…GLIF, LVSG…AVIF, and GLSL…EIKS. The EamA domain occupies 45–152; it reads GFPVIFIPLL…LTVGAAVLGM (108 aa). The tract at residues 329–351 is disordered; the sequence is RRIQQEESQETEQSSLSRPISEC.

This sequence belongs to the purine permeases (TC 2.A.7.14) family. As to expression, restricted to pollen.

Its subcellular location is the membrane. May be involved in transport of purine derivatives during pollen germination and tube elongation. In Arabidopsis thaliana (Mouse-ear cress), this protein is Purine permease 3 (PUP3).